The chain runs to 938 residues: TFIIH basal transcription factor complex helicase/translocase XPB subunit (938 aa).

A Helicase ATP-binding domain is found at 394 to 562; the sequence is FRSGNKAHQG…DLRHLVGPKL (169 aa). Position 407–414 (407–414) interacts with ATP; that stretch reads LPCGAGKT. The DEVH box signature appears at 515–518; sequence DEVH. A Helicase C-terminal domain is found at 627 to 781; that stretch reads WCTQALLEFH…SYRVLQSDMV (155 aa).

This sequence belongs to the helicase family. RAD25/XPB subfamily. Component of the 7-subunit TFIIH core complex composed of XPB, XPD, SSL1, TFB1, TFB2, TFB4 and TFB5.

The enzyme catalyses Couples ATP hydrolysis with the unwinding of duplex DNA by translocating in the 3'-5' direction.. It carries out the reaction ATP + H2O = ADP + phosphate + H(+). ATP-dependent 3'-5' DNA helicase/translocase; binds dsDNA rather than ssDNA, unzipping it in a translocase rather than classical helicase activity. Component of the general transcription factor IIH (TFIIH) core complex, involved in spliced leader RNA (SL RNA) gene transcription by RNA polymerase II. TFIIH has an essential role in transcription initiation. When the pre-initiation complex (PIC) has been established, TFIIH is required for promoter opening and promoter escape. The ATPase activity of XPB is required for promoter opening and promoter escape. The polypeptide is TFIIH basal transcription factor complex helicase/translocase XPB subunit (Trypanosoma brucei brucei (strain 927/4 GUTat10.1)).